A 175-amino-acid chain; its full sequence is NADH-ubiquinone oxidoreductase chain 6 (175 aa).

5 consecutive transmembrane segments (helical) span residues Met1–Ser21, Val27–Phe47, Gly49–Gly69, Val88–Leu108, and Tyr149–Met169.

Belongs to the complex I subunit 6 family. As to quaternary structure, core subunit of respiratory chain NADH dehydrogenase (Complex I) which is composed of 45 different subunits.

It localises to the mitochondrion inner membrane. It catalyses the reaction a ubiquinone + NADH + 5 H(+)(in) = a ubiquinol + NAD(+) + 4 H(+)(out). Its function is as follows. Core subunit of the mitochondrial membrane respiratory chain NADH dehydrogenase (Complex I) which catalyzes electron transfer from NADH through the respiratory chain, using ubiquinone as an electron acceptor. Essential for the catalytic activity and assembly of complex I. In Pteropus dasymallus (Ryukyu flying fox), this protein is NADH-ubiquinone oxidoreductase chain 6 (MT-ND6).